Consider the following 204-residue polypeptide: Abscisic acid receptor PYL3 (204 aa).

Residues 40–191 form an START-like region; that stretch reads HEPRDHQCSS…NLKSLAEVSE (152 aa). A disulfide bridge connects residues Cys-47 and Cys-172. Residues Lys-76, 104–109, 131–137, and Glu-156 each bind abscisate; these read ATRSTE and RLKNYSS. Positions 100–104 match the Gate loop motif; that stretch reads SGLPA. The Latch loop signature appears at 130–132; it reads HRL.

The protein belongs to the PYR/PYL/RCAR abscisic acid intracellular receptor family. In terms of assembly, monomer. Interacts with PP2C50. Binding to PP2C50 is dependent on the presence of abscisic acid (ABA). Interacts with PP2C30 and PP2C53.

The protein resides in the cytoplasm. It is found in the cytosol. The protein localises to the nucleus. In terms of biological role, involved in abscisic acid (ABA) signaling during seed germination and abiotic stress response. Acts as a positive regulator of ABA-mediated inhibition of seed germination, and tolerance to drought and cold stresses. Together with PP2C50 and SAPK10, may form an ABA signaling module involved in stress response. Inhibits the protein phosphatases PP2C06 and PP2C09 when activated by abscisic acid (ABA). This chain is Abscisic acid receptor PYL3, found in Oryza sativa subsp. japonica (Rice).